We begin with the raw amino-acid sequence, 460 residues long: Cysteine--tRNA ligase (460 aa).

Cysteine 29 lines the Zn(2+) pocket. A 'HIGH' region motif is present at residues 31 to 41; sequence PTVYDFAHIGN. The Zn(2+) site is built by cysteine 227, histidine 252, and glutamate 256. A 'KMSKS' region motif is present at residues 285–289; it reads KMSKS. Lysine 288 is an ATP binding site.

This sequence belongs to the class-I aminoacyl-tRNA synthetase family. In terms of assembly, monomer. Zn(2+) serves as cofactor.

The protein resides in the cytoplasm. It carries out the reaction tRNA(Cys) + L-cysteine + ATP = L-cysteinyl-tRNA(Cys) + AMP + diphosphate. This Bradyrhizobium diazoefficiens (strain JCM 10833 / BCRC 13528 / IAM 13628 / NBRC 14792 / USDA 110) protein is Cysteine--tRNA ligase.